The chain runs to 2672 residues: eIF-2-alpha kinase activator GCN1 (2672 aa).

HEAT repeat units lie at residues 5-42 (LNWE…QETL), 79-117 (NLEP…WINS), 174-211 (CIFQ…YSKL), 227-267 (QAAL…NPPS), 329-366 (FASS…KISN), 372-410 (EDLT…THYE), 509-549 (HGHA…NSSI), 611-648 (KYVT…IFNI), 706-745 (IQPN…EEGV), 902-932 (QDYL…IDSI), and 933-970 (SLTY…EEDE). The HEAT 12; degenerate repeat unit spans residues 975–994 (LLLAMEIISVHAEAFEDPSI). The stretch at 995–1030 (PRISIVEVLLSLLSLPSKAKIAKDCFNALCQSISVA) is one HEAT 13; degenerate repeat. 32 HEAT repeats span residues 1031–1067 (PNQE…LEPF), 1099–1138 (VVND…FTSE), 1185–1224 (STVA…REPI), 1243–1281 (QNSK…HLQQ), 1284–1321 (ARIH…QFKQ), 1363–1401 (LSEF…SLGK), 1405–1442 (PYVI…HTTG), 1444–1480 (GVKK…LDPT), 1484–1521 (ASLS…VIRN), 1523–1559 (EIQK…HYID), 1561–1598 (PSLA…LVDT), 1603–1640 (PYLQ…RLGE), 1641–1679 (EQFP…GLGL), 1681–1717 (KLDE…CFGS), 1721–1758 (PYIN…NYAT), 1760–1796 (AVDL…QVTG), 1825–1862 (DRRD…NTPR), 1863–1903 (AVKE…RVGG), 1905–1942 (ALSQ…SAST), 1947–1984 (QFQS…VVGK), 1985–2024 (TAVD…VIFP), 2026–2055 (LIPT…SALY), 2057–2095 (RLSI…SVND), 2097–2134 (EGLH…KTVL), 2138–2175 (VYIP…KVDK), 2206–2243 (RGPN…KTPA), 2250–2286 (VSVI…KIPM), 2290–2328 (PFIP…HQPR), 2347–2384 (GVKT…EEML), 2392–2429 (VAYA…ETGK), 2450–2487 (GLID…LEGE), and 2506–2546 (ENIN…FKFD). Residues 1330 to 1641 (LMEKLLNPTV…GALVERLGEE (312 aa)) form an EF3-like region region. Residues 2207 to 2356 (GPNCVLPIFL…GVKTAMLKAL (150 aa)) form an RWDBD region region.

Belongs to the GCN1 family. Interacts (via N- and C-terminus) with GCN2 (via N-terminal RWD domain); this interaction stimulates GCN2 kinase activity in a GCN20-dependent manner in response to amino acid starvation. Interacts (via C-terminus) with GCN20 (via N-terminus); this interaction stimulates GCN2 kinase activity in response to amino acid starvation. The GCN1-GCN20 complex interacts with GCN2 on translating ribosomes in amino acid-starved cells; GCN1 may bind near the ribosomal A-site and promotes the transfer of uncharged tRNAs from the A-site to the tRNA-binding domain in GCN2 for its subsequent kinase activation, and hence allowing GCN4 translational activation and derepression of amino acid biosynthetic genes. Interacts (via C-terminus) with YIH1 (via N-terminus); this interaction reduces the GCN1-GCN20 complex formation and prevents the interaction of GCN1 with GCN2 and GCN2 kinase activation in amino acid-starved cells. Interacts with GIR2; this interaction prevents the interaction of GCN1 with GCN2 and GCN2 kinase activation in amino acid-starved cells. Interacts (via middle region) with RPS10A and RPS10B; these interactions are direct and promote GCN2 kinase activation. Associates (via N-terminus) with ribosomes; this association is stimulated in a ATP- and GCN20-dependent manner and is necessary to activate GCN2 kinase activity.

The protein resides in the cytoplasm. Its function is as follows. Ribosome collision sensor that activates a translation quality control pathway when a ribosome has stalled during translation. Directly binds to the ribosome and acts as a sentinel for colliding ribosomes. GCN1 also acts as a positive activator of the integrated stress response (ISR) by mediating activation of GCN2 in response to low amino acid, carbon, or purine availability. Component of the GCN1-GCN20 complex that forms a complex with GCN2 on translating ribosomes: during this process, GCN1 acts as a chaperone to facilitate delivery of uncharged tRNAs that enter the A-site of ribosomes to the tRNA-binding domain of GCN2, and hence stimulating GCN2 kinase activity, leading to phosphorylation of eukaryotic translation initiation factor 2 (eIF-2-alpha/SUI2). eIF-2-alpha/SUI2 phosphorylation converts eIF-2-alpha/SUI2 into a global protein synthesis inhibitor, leading to a global attenuation of cap-dependent translation, and thus to a reduced overall utilization of amino acids, while concomitantly initiating the preferential translation of ISR-specific mRNAs, such as the transcriptional activator GCN4, and hence allowing GCN4-mediated reprogramming of amino acid biosynthetic gene expression to alleviate nutrient depletion. The protein is eIF-2-alpha kinase activator GCN1 of Saccharomyces cerevisiae (strain ATCC 204508 / S288c) (Baker's yeast).